Consider the following 375-residue polypeptide: Putative F-box only protein 11 (375 aa).

The region spanning 1-46 is the F-box domain; that stretch reads MVSVNLPWELVEEILCRVPPQSLVKFRTVCKQWNSLFDDNKFVNDH.

This is Putative F-box only protein 11 (FBX11) from Arabidopsis thaliana (Mouse-ear cress).